Reading from the N-terminus, the 481-residue chain is Trichosetin biosynthesis cluster MFS transporter (481 aa).

Polar residues predominate over residues 1–13; sequence MSTTPQMSQSGFQ. The disordered stretch occupies residues 1–63; the sequence is MSTTPQMSQS…DGPDDPQHPL (63 aa). Residues 20 to 31 show a composition bias toward basic and acidic residues; sequence GAREDVGTEAQE. A glycan (N-linked (GlcNAc...) asparagine) is linked at asparagine 64. The chain crosses the membrane as a helical span at residues 72–92; that stretch reads LHVGIVSLSTLAANLAATMFA. Asparagine 103 carries N-linked (GlcNAc...) asparagine glycosylation. 5 helical membrane-spanning segments follow: residues 111–131, 147–167, 169–189, 200–220, and 228–248; these read AMTV…LAPL, VYMA…FLVF, IIAG…VADL, ALFA…GGFV, and WTFR…FALM. An N-linked (GlcNAc...) asparagine glycan is attached at asparagine 252. Helical transmembrane passes span 302 to 322, 353 to 373, 380 to 400, 403 to 423, and 446 to 466; these read PIVL…FLLF, LLLM…YGWT, WIVP…VVIP, IYLV…ANLL, and GWGN…PWIF.

This sequence belongs to the major facilitator superfamily.

The protein resides in the cell membrane. Efflux pump required for efficient secretion of trichosetin or other secondary metabolies produced by the trichosetin gene cluster. Plays a crucial role in detoxification of the toxic trichosetin in Gibberella fujikuroi cells. This chain is Trichosetin biosynthesis cluster MFS transporter, found in Gibberella fujikuroi (strain CBS 195.34 / IMI 58289 / NRRL A-6831) (Bakanae and foot rot disease fungus).